A 371-amino-acid polypeptide reads, in one-letter code: tRNA 2-selenouridine synthase (371 aa).

The Rhodanese domain occupies 12–135; it reads FLDDVPMMDM…MRTFLLDTTQ (124 aa). The S-selanylcysteine intermediate role is filled by Cys-95.

Belongs to the SelU family. As to quaternary structure, monomer.

The catalysed reaction is 5-methylaminomethyl-2-thiouridine(34) in tRNA + selenophosphate + (2E)-geranyl diphosphate + H2O + H(+) = 5-methylaminomethyl-2-selenouridine(34) in tRNA + (2E)-thiogeraniol + phosphate + diphosphate. It catalyses the reaction 5-methylaminomethyl-2-thiouridine(34) in tRNA + (2E)-geranyl diphosphate = 5-methylaminomethyl-S-(2E)-geranyl-thiouridine(34) in tRNA + diphosphate. It carries out the reaction 5-methylaminomethyl-S-(2E)-geranyl-thiouridine(34) in tRNA + selenophosphate + H(+) = 5-methylaminomethyl-2-(Se-phospho)selenouridine(34) in tRNA + (2E)-thiogeraniol. The enzyme catalyses 5-methylaminomethyl-2-(Se-phospho)selenouridine(34) in tRNA + H2O = 5-methylaminomethyl-2-selenouridine(34) in tRNA + phosphate. In terms of biological role, involved in the post-transcriptional modification of the uridine at the wobble position (U34) of tRNA(Lys), tRNA(Glu) and tRNA(Gln). Catalyzes the conversion of 2-thiouridine (S2U-RNA) to 2-selenouridine (Se2U-RNA). Acts in a two-step process involving geranylation of 2-thiouridine (S2U) to S-geranyl-2-thiouridine (geS2U) and subsequent selenation of the latter derivative to 2-selenouridine (Se2U) in the tRNA chain. The protein is tRNA 2-selenouridine synthase of Pseudomonas entomophila (strain L48).